Consider the following 462-residue polypeptide: Ammonium transporter Rh type B (462 aa).

Residues 1-11 (MTDPSTNMRLK) are Cytoplasmic-facing. A helical transmembrane segment spans residues 12 to 32 (LPITCFILQIILIILFGVLVQ). Topologically, residues 33-62 (YDEDTDAKKHHHGNHSESKSDIENDFYYRY) are extracellular. Asparagine 46 carries N-linked (GlcNAc...) asparagine glycosylation. The chain crosses the membrane as a helical span at residues 63-83 (PSFQDVHVMIFVGFGFLMTFL). Residues 84–94 (QRYGFSSVGFN) are Cytoplasmic-facing. The helical transmembrane segment at 95 to 115 (FLIAAFSLQWATLMQGFFHGL) threads the bilayer. Residues 116–125 (HEGKIHIGVE) are Extracellular-facing. The chain crosses the membrane as a helical span at residues 126–146 (SMINADFCTGSVLISFGAVLG). The Cytoplasmic segment spans residues 147-152 (KTSPVQ). Residues 153–173 (LLFMAVFEVTLFAVNEFILLT) traverse the membrane as a helical segment. Residues 174-180 (LLGTKDA) lie on the Extracellular side of the membrane. Residues 181 to 201 (GGSMTIHTFGAYFGLMVTRIL) form a helical membrane-spanning segment. The Cytoplasmic segment spans residues 202–220 (YRPNLDKSKHKNCSVYHSD). A helical transmembrane segment spans residues 221 to 241 (LFAMIGTLYLWMFWPSFNSAV). Residues 242–302 (TEHGDPQHRT…VAAGTAGEMM (61 aa)) are Extracellular-facing. Residues 303–323 (LTPFGSMIVGFLAGIISVLGF) traverse the membrane as a helical segment. Topologically, residues 324-344 (KYLTPILENKLKIQDTCGIHN) are cytoplasmic. The chain crosses the membrane as a helical span at residues 345-365 (LHGMPGVLGAIVGAVTASLAS). Over 366 to 395 (KEVYGEGLEKVFPDVASGKRTASDQGGVQA) the chain is Extracellular. Residues 396–416 (ISLAVTLGMALFGGLIVGFIL) form a helical membrane-spanning segment. The Cytoplasmic segment spans residues 417–462 (KLPIFGAPRDTTCFEDSLYWEVPGEEESHEDQLTTVKTEESDKLNS). The disordered stretch occupies residues 441–462 (EEESHEDQLTTVKTEESDKLNS). Basic and acidic residues predominate over residues 453–462 (KTEESDKLNS).

This sequence belongs to the ammonium transporter (TC 2.A.49) family. Rh subfamily.

It is found in the basolateral cell membrane. The protein resides in the cytoplasmic vesicle membrane. Its function is as follows. Functions as an ammonia transporter. May play a role in the elimination of ammonia in the gill. This is Ammonium transporter Rh type B (rhbg) from Oryzias latipes (Japanese rice fish).